Here is a 160-residue protein sequence, read N- to C-terminus: MTMPPPRPPRILVKRLAHAEGLALPAYQTAGAAGLDLAAALPHGTTLVLEPGGRHLLPTGFCLEIPEGYEAQVRPRSGLARKHGVTVLNTPGTIDADYRGEIGVILINMGDEPFEIVRGTRIAQLVVAPCVQAELIETHTLSDTERGEDGFGSTGHGSHQ.

Substrate is bound by residues 76–78 (RSG), N89, and 93–95 (TID). The segment covering 139–149 (HTLSDTERGED) has biased composition (basic and acidic residues). A disordered region spans residues 139–160 (HTLSDTERGEDGFGSTGHGSHQ). A compositionally biased stretch (gly residues) spans 150–160 (GFGSTGHGSHQ).

The protein belongs to the dUTPase family. Mg(2+) is required as a cofactor.

The enzyme catalyses dUTP + H2O = dUMP + diphosphate + H(+). Its pathway is pyrimidine metabolism; dUMP biosynthesis; dUMP from dCTP (dUTP route): step 2/2. Functionally, this enzyme is involved in nucleotide metabolism: it produces dUMP, the immediate precursor of thymidine nucleotides and it decreases the intracellular concentration of dUTP so that uracil cannot be incorporated into DNA. The chain is Deoxyuridine 5'-triphosphate nucleotidohydrolase from Beijerinckia indica subsp. indica (strain ATCC 9039 / DSM 1715 / NCIMB 8712).